The sequence spans 52 residues: Sperm protamine P1 (52 aa).

The protein belongs to the protamine P1 family. Cross-linked by interchain disulfide bonds around the DNA-helix. In terms of tissue distribution, testis.

The protein resides in the nucleus. It is found in the chromosome. Functionally, protamines substitute for histones in the chromatin of sperm during the haploid phase of spermatogenesis. They compact sperm DNA into a highly condensed, stable and inactive complex. The chain is Sperm protamine P1 (PRM1) from Alouatta seniculus (Red howler monkey).